The following is a 368-amino-acid chain: tRNA-specific 2-thiouridylase MnmA (368 aa).

ATP-binding positions include 11 to 18 and Met37; that span reads GMSGGVDS. The tract at residues 97-99 is interaction with target base in tRNA; the sequence is NPD. The Nucleophile role is filled by Cys102. Cys102 and Cys199 are disulfide-bonded. ATP is bound at residue Gly127. Residues 149 to 151 form an interaction with tRNA region; it reads KDQ. Cys199 serves as the catalytic Cysteine persulfide intermediate. The segment at 311-312 is interaction with tRNA; that stretch reads RY.

This sequence belongs to the MnmA/TRMU family. As to quaternary structure, interacts with TusE.

The protein resides in the cytoplasm. It carries out the reaction S-sulfanyl-L-cysteinyl-[protein] + uridine(34) in tRNA + AH2 + ATP = 2-thiouridine(34) in tRNA + L-cysteinyl-[protein] + A + AMP + diphosphate + H(+). Its function is as follows. Catalyzes the 2-thiolation of uridine at the wobble position (U34) of tRNA(Lys), tRNA(Glu) and tRNA(Gln), leading to the formation of s(2)U34, the first step of tRNA-mnm(5)s(2)U34 synthesis. Sulfur is provided by IscS, via a sulfur-relay system. Binds ATP and its substrate tRNAs. This Escherichia coli O139:H28 (strain E24377A / ETEC) protein is tRNA-specific 2-thiouridylase MnmA.